We begin with the raw amino-acid sequence, 467 residues long: Involucrin (467 aa).

A disordered region spans residues 48–467 (EIQEKGFPKH…ELENRTQQEK (420 aa)). Over residues 49–75 (IQEKGFPKHEEKRPNPVKDLPDQKCEH) the composition is skewed to basic and acidic residues. Low complexity-rich tracts occupy residues 76-95 (QQQPGPQKQQLQVKKSQQEL) and 105-177 (QQLP…VPQE). 2 stretches are compositionally biased toward basic and acidic residues: residues 178 to 192 (LHLRQHQEKLQDPEL) and 220 to 231 (RHQEPQEQELHL). Over residues 278-290 (QQQQESPEPELQL) the composition is skewed to low complexity. Basic and acidic residues-rich tracts occupy residues 295–318 (QSHEPDMAGDQKEKQKLHKPELYL), 348–373 (LEEKQHQKPPEPELHLGKQQESHEPD), 380–391 (EKQKLGEPELHL), 415–437 (KQEKASREQQLDYSHLEQEKELS), and 450–467 (KQLERKKHELENRTQQEK).

The protein belongs to the involucrin family. Directly or indirectly cross-linked to cornifelin (CNFN). Substrate of transglutaminase. Specific glutamines or lysines are cross-linked to keratins, desmoplakin and to inter involucrin molecules. In terms of tissue distribution, keratinocytes of epidermis and other stratified squamous epithelia.

It is found in the cytoplasm. Part of the insoluble cornified cell envelope (CE) of stratified squamous epithelia. The chain is Involucrin (Ivl) from Mus musculus (Mouse).